The following is a 514-amino-acid chain: CUGBP Elav-like family member 2 (514 aa).

3 RRM domains span residues Ile44–Ser127, Arg136–Thr216, and Ala429–Ser507.

The protein belongs to the CELF/BRUNOL family.

The protein resides in the nucleus. Its subcellular location is the cytoplasm. In terms of biological role, RNA-binding protein implicated in the regulation of several post-transcriptional events. May be involved in pre-mRNA alternative splicing, mRNA translation repression and stability. The sequence is that of CUGBP Elav-like family member 2 (celf2) from Danio rerio (Zebrafish).